Reading from the N-terminus, the 782-residue chain is U-box domain-containing protein 7 (782 aa).

A U-box domain is found at 271–345 (VPPEELRCPI…ASWCEQNGTQ (75 aa)). ARM repeat units follow at residues 456-499 (EEAR…NLAV), 502-541 (NRNKELMLTSGVIRLLEKMISSAESHGSATALYLNLSCLD), 542-581 (EAKSVIGSSQAVPFLVQLLQKEIETQCKLDALHALYNLST), 583-623 (SPNI…NLAS), and 626-665 (EGKDEAVSSQGMISSLATVLDMGDTTEQEQAVSCLLILCN). Positions 707 to 729 (EERQQRDQPSSNRDEPPQKEPAR) are enriched in basic and acidic residues. The interval 707 to 765 (EERQQRDQPSSNRDEPPQKEPARKSLSAPLSVHGSTPASASVQDYEPRVLSKSMSRRKS) is disordered. The span at 739-748 (HGSTPASASV) shows a compositional bias: polar residues.

The catalysed reaction is S-ubiquitinyl-[E2 ubiquitin-conjugating enzyme]-L-cysteine + [acceptor protein]-L-lysine = [E2 ubiquitin-conjugating enzyme]-L-cysteine + N(6)-ubiquitinyl-[acceptor protein]-L-lysine.. The protein operates within protein modification; protein ubiquitination. In terms of biological role, functions as an E3 ubiquitin ligase. This Arabidopsis thaliana (Mouse-ear cress) protein is U-box domain-containing protein 7 (PUB7).